A 1207-amino-acid polypeptide reads, in one-letter code: DNA-directed RNA polymerase subunit beta' (1207 aa).

Zn(2+) is bound by residues C60, C62, C75, and C78. Mg(2+) contacts are provided by D449, D451, and D453. Positions 822, 896, 903, and 906 each coordinate Zn(2+).

This sequence belongs to the RNA polymerase beta' chain family. In terms of assembly, the RNAP catalytic core consists of 2 alpha, 1 beta, 1 beta' and 1 omega subunit. When a sigma factor is associated with the core the holoenzyme is formed, which can initiate transcription. It depends on Mg(2+) as a cofactor. The cofactor is Zn(2+).

It carries out the reaction RNA(n) + a ribonucleoside 5'-triphosphate = RNA(n+1) + diphosphate. DNA-dependent RNA polymerase catalyzes the transcription of DNA into RNA using the four ribonucleoside triphosphates as substrates. This chain is DNA-directed RNA polymerase subunit beta', found in Staphylococcus aureus (strain MRSA252).